The following is a 91-amino-acid chain: Putative regulatory protein Cphy_2880 (91 aa).

This sequence belongs to the RemA family.

The sequence is that of Putative regulatory protein Cphy_2880 from Lachnoclostridium phytofermentans (strain ATCC 700394 / DSM 18823 / ISDg) (Clostridium phytofermentans).